The sequence spans 942 residues: MADPARRDPRGRAPELPGDLSSQEEEEEESDSDAGASSLGSCSSASSDTDLEPEWLDSVQRNGELFYLELSEDEEESLLPETQTVNHVNHVRFSEKEVIIEEDDSRERKKYEPKLRRFTKILKSKSLLPKRHHKKKSSNTGPVSILKHQSTQRTGVTVQQRYKDVTVYINPKKLTAIKAREQAKLLEVLVGVIHQTKWSWKRSGKQADGERLVVHGLVPGGSAMKSGQVLVGDVLVAVNDVDVTSENIERVLSCIPGPMQVKLTFENAYAVKKETAQPKKKKAQSSTNDLVKLLCGSEADATQHSTLSIPHITMYLTLQLQSEVAREEQEMLYHYPVSEASQKLKSVRGIFLTLCDMLESVTGTQVTSSSLHVNGKQIHVAYLKESDKLLLIGLPAEEVPLPQLRNMTEDVAQTLKFMYGSLDSAFCQVENTPRLDHFFSLFFERALRPGKLHLSASPSAQQYDAASAVLLDNLPGVRWLLLPQELKVELDTALSDLEAADFQELSEDYYDMRRLYTILGSSLFYKGYMVCSHLPKDDVVEIAAYCRQYCLLPLAAQQRIGQLIIWREVFPQHHLQPATDSDPEAFQEPEGRYFLLIVGLRHYMLCVLLEAGGCASKATGNPGPDCIYVDQARATLHQLEGVESRIEEQLAATPGPCLSCADWFLAAPREKADSLTTSPILGRLQGPSKTAASPTCRRTFFSDYSFKARKPSPSRIGGGREPGEGEENVGLSPHTTPDTVRKQRESEGSDDNVALLKLARKKSTLPNPFHLGTSKKELSEKELEVYNMMKLTSGPENTLFHYVALETVQGIFITPTHEEVAQLGGSVHSQLIKNFHRCCLTIRAVFQQTLKVEKKKALSDGDHLESANSVSSLSPVKEHGVLFECSPENWTDQKKTPPVMSYWVVGRLFLNPKPQELYVCFHDSVSEIAIEMAFRLFFGLTL.

Over residues methionine 1–alanine 13 the composition is skewed to basic and acidic residues. Disordered stretches follow at residues methionine 1–glutamate 54 and proline 129–serine 150. Acidic residues predominate over residues serine 22–serine 32. The segment covering aspartate 33 to aspartate 48 has biased composition (low complexity). The segment covering serine 138–serine 150 has biased composition (polar residues). One can recognise a PDZ domain in the interval leucine 189–asparagine 267. Serine 674 and serine 678 each carry phosphoserine. The segment at lysine 707–asparagine 752 is disordered.

The protein belongs to the inturned family. In terms of assembly, component of the CPLANE (ciliogenesis and planar polarity effectors) complex, composed of INTU, FUZ and WDPCP. Interacts with CPLANE1. Interacts with NPHP4 and DAAM1; INTU is mediating the interaction between NPHP4 and DAAM1.

The protein localises to the cytoplasm. It is found in the cell surface. Its subcellular location is the cytoskeleton. It localises to the cilium basal body. The protein resides in the microtubule organizing center. The protein localises to the centrosome. It is found in the centriole. Its function is as follows. Plays a key role in ciliogenesis and embryonic development. Regulator of cilia formation by controlling the organization of the apical actin cytoskeleton and the positioning of the basal bodies at the apical cell surface, which in turn is essential for the normal orientation of elongating ciliary microtubules. Plays a key role in definition of cell polarity via its role in ciliogenesis but not via conversion extension. Has an indirect effect on hedgehog signaling. Proposed to function as core component of the CPLANE (ciliogenesis and planar polarity effectors) complex involved in the recruitment of peripheral IFT-A proteins to basal bodies. Required for recruitment of CPLANE2 to the mother centriole. Binds phosphatidylinositol 3-phosphate with highest affinity, followed by phosphatidylinositol 4-phosphate and phosphatidylinositol 5-phosphate. This chain is Protein inturned (Intu), found in Rattus norvegicus (Rat).